Here is a 558-residue protein sequence, read N- to C-terminus: Tektin-5 (558 aa).

A coiled-coil region spans residues 347 to 381 (ISEETDVKNKLQTQLAKILQEIFQAENTIMLLERA).

This sequence belongs to the tektin family. Microtubule inner protein component of sperm flagellar doublet microtubules. Interacts with TEKT3. Ubiquitinated, leading to its degradation. Deubiquitinated by USP16, promoting its stability. Specifically expressed in testis.

It is found in the cytoplasm. It localises to the cytoskeleton. Its subcellular location is the flagellum axoneme. Sperm-specific microtubule inner protein (MIP) part of the dynein-decorated doublet microtubules (DMTs) in flagellar axoneme. Forms an extensive interaction network in different conformations that reinforces the helix bundle composed by other tektin proteins (TEKT1 to TEKT4) and MIPs to anchor the tektin bundle onto the tubulin wall of A-tubule of the sperm flagellum. The sequence is that of Tektin-5 from Rattus norvegicus (Rat).